Reading from the N-terminus, the 77-residue chain is U8-lycotoxin-Ls1u (77 aa).

The first 20 residues, 1-20 (MKLIIFTGLVLFAIVSLIEA), serve as a signal peptide directing secretion. A propeptide spanning residues 21-26 (QAENEK) is cleaved from the precursor.

It belongs to the neurotoxin 19 (CSTX) family. 08 (U8-Lctx) subfamily. Post-translationally, contains 4 disulfide bonds. Expressed by the venom gland.

It localises to the secreted. The polypeptide is U8-lycotoxin-Ls1u (Lycosa singoriensis (Wolf spider)).